Reading from the N-terminus, the 424-residue chain is Argininosuccinate synthase (424 aa).

ATP is bound by residues Ala9–Ser17 and Ala35. L-citrulline-binding residues include Tyr86 and Ser91. Ser114–Asn122 is a binding site for ATP. Residues Thr118, Asn122, and Asp123 each contribute to the L-aspartate site. Asn122 contributes to the L-citrulline binding site. L-citrulline-binding residues include Arg126, Ser179, Ser188, Glu269, and Tyr281.

The protein belongs to the argininosuccinate synthase family. As to quaternary structure, homotetramer.

It catalyses the reaction L-citrulline + L-aspartate + ATP = 2-(N(omega)-L-arginino)succinate + AMP + diphosphate + H(+). Its pathway is amino-acid biosynthesis; L-arginine biosynthesis; L-arginine from L-ornithine and carbamoyl phosphate: step 2/3. It functions in the pathway nitrogen metabolism; urea cycle; (N(omega)-L-arginino)succinate from L-aspartate and L-citrulline: step 1/1. The chain is Argininosuccinate synthase from Anopheles gambiae (African malaria mosquito).